Reading from the N-terminus, the 395-residue chain is Subtilisin-like protease 5 (395 aa).

Positions 1–19 (MGFLTVLYLSLAALSVTNA) are cleaved as a signal peptide. The propeptide occupies 20–115 (AQIMSAPNGA…VEPDAIISQH (96 aa)). The 77-residue stretch at 36 to 112 (YIVVMKDDTS…VAFVEPDAII (77 aa)) folds into the Inhibitor I9 domain. One can recognise a Peptidase S8 domain in the interval 124-395 (PWGLSRLSNR…RRLLYNGSGR (272 aa)). Residues Asp155 and His186 each act as charge relay system in the active site. Asn229 and Asn247 each carry an N-linked (GlcNAc...) asparagine glycan. Ser341 acts as the Charge relay system in catalysis. The tract at residues 374–395 (QPTIHNPGPDTTRRLLYNGSGR) is disordered. A glycan (N-linked (GlcNAc...) asparagine) is linked at Asn391.

The protein belongs to the peptidase S8 family.

It is found in the secreted. Functionally, secreted subtilisin-like serine protease with keratinolytic activity that contributes to pathogenicity. The protein is Subtilisin-like protease 5 (SUB5) of Arthroderma otae (strain ATCC MYA-4605 / CBS 113480) (Microsporum canis).